A 543-amino-acid polypeptide reads, in one-letter code: Acrosin-binding protein (543 aa).

A signal peptide spans methionine 1–alanine 25. Residues glutamine 26–phenylalanine 106 are pro-ACR binding. The propeptide at glutamine 26–arginine 276 is removed in mature form. The disordered stretch occupies residues alanine 187–valine 239. Residues alanine 193–aspartate 216 show a composition bias toward basic and acidic residues. A compositionally biased stretch (acidic residues) spans glycine 217 to lysine 232. A pro-ACR binding region spans residues leucine 319–arginine 427.

Binds proacrosin (ACR). Does not bind the mature form of ACR. Post-translationally, the N-terminus is blocked. In terms of processing, phosphorylated on Tyr residues in capacitated sperm. Synthesized as a 60-kDa precursor, the 32-kDa mature form is post-translationally produced by the removal of the N-terminal half of the precursor during sperm maturation in the testis and/or epididymis. Specifically expressed in testis.

It is found in the secreted. The protein localises to the cytoplasmic vesicle. Its subcellular location is the secretory vesicle. It localises to the acrosome. Its function is as follows. Acrosomal protein that maintains proacrosin (pro-ACR) as an enzymatically inactive zymogen in the acrosome. Involved also in the acrosome formation. In Cavia porcellus (Guinea pig), this protein is Acrosin-binding protein (ACRBP).